The sequence spans 944 residues: 2-oxoglutarate dehydrogenase E1 component (944 aa).

The tract at residues 914–944 is disordered; sequence RRRRSSPAEGDPTVHKKEQERIVSDSLTRKN. Residues 925–936 show a composition bias toward basic and acidic residues; sequence PTVHKKEQERIV.

It belongs to the alpha-ketoglutarate dehydrogenase family. In terms of assembly, homodimer. Part of the 2-oxoglutarate dehydrogenase (OGDH) complex composed of E1 (2-oxoglutarate dehydrogenase), E2 (dihydrolipoamide succinyltransferase) and E3 (dihydrolipoamide dehydrogenase); the complex contains multiple copies of the three enzymatic components (E1, E2 and E3). It depends on thiamine diphosphate as a cofactor.

It carries out the reaction N(6)-[(R)-lipoyl]-L-lysyl-[protein] + 2-oxoglutarate + H(+) = N(6)-[(R)-S(8)-succinyldihydrolipoyl]-L-lysyl-[protein] + CO2. In terms of biological role, E1 component of the 2-oxoglutarate dehydrogenase (OGDH) complex which catalyzes the decarboxylation of 2-oxoglutarate, the first step in the conversion of 2-oxoglutarate to succinyl-CoA and CO(2). This chain is 2-oxoglutarate dehydrogenase E1 component, found in Bacillus subtilis (strain 168).